A 159-amino-acid polypeptide reads, in one-letter code: Trafficking protein particle complex subunit 6A (159 aa).

Position 33 is a phosphoserine (Ser33).

Belongs to the TRAPP small subunits family. BET3 subfamily. In terms of assembly, part of the multisubunit transport protein particle (TRAPP) complex. Heterodimer with TRAPPC3. The heterodimer TRAPPC3-TRAPPC6A interacts with TRAPPC2L. Interacts with TRAPPC2L.

It localises to the golgi apparatus. It is found in the cis-Golgi network. The protein resides in the endoplasmic reticulum. May play a role in vesicular transport during the biogenesis of melanosomes. This chain is Trafficking protein particle complex subunit 6A, found in Bos taurus (Bovine).